A 208-amino-acid chain; its full sequence is MLKFIEHTGVVAPLDISNVDTDAIIPKQFLKGINKKGFGKFLFHDWRYLDSNQLKINNKFILNKKIYENASILLTKKNFGCGSSREHAVWSLLDYGFKVIVASSFSDIFYNNSFNNKLLLITLDEKKIDSIFDIVKKNLGINISINLLTNKVIINQKTFFFKLDEFRRVCFLNDIDHIDLTMNSLKKINVYENNIPFFLLNRKEFKSH.

Belongs to the LeuD family. LeuD type 1 subfamily. As to quaternary structure, heterodimer of LeuC and LeuD.

The catalysed reaction is (2R,3S)-3-isopropylmalate = (2S)-2-isopropylmalate. It functions in the pathway amino-acid biosynthesis; L-leucine biosynthesis; L-leucine from 3-methyl-2-oxobutanoate: step 2/4. Its function is as follows. Catalyzes the isomerization between 2-isopropylmalate and 3-isopropylmalate, via the formation of 2-isopropylmaleate. The sequence is that of 3-isopropylmalate dehydratase small subunit (leuD) from Buchnera aphidicola subsp. Diuraphis noxia.